The sequence spans 647 residues: Pumilio homolog 3 (647 aa).

Positions 1–10 (MEVKGKKKIT) are enriched in basic residues. Residues 1-123 (MEVKGKKKIT…KKKKELKQNR (123 aa)) are disordered. Residue lysine 33 is modified to N6-acetyllysine. Residues 59 to 68 (PGKKRVKQFK) show a composition bias toward basic residues. Over residues 93–123 (FQPDGKSDESAAKKPKWDDFKKKKKELKQNR) the composition is skewed to basic and acidic residues. Positions 105–117 (KKPKWDDFKKKKK) match the Nuclear localization signal motif. A PUM-HD domain is found at 142–509 (ESLRRKDCDK…VVLDKSVCVL (368 aa)). 11 Pumilio repeats span residues 176–211 (HDST…LSKA), 212–247 (KYSR…MLRH), 248–276 (SEAS…ELYG), 288–324 (PTLE…VIKH), 325–360 (SLVH…LAHT), 361–396 (HDGA…IANG), 397–434 (QYSH…IVND), 435–503 (KYGR…VVLD), 504–550 (KSVC…IAEH), 551–595 (PAGH…WASI), and 596–635 (NRGA…KSTS).

As to quaternary structure, interacts with PARP1 (via catalytic domain).

The protein localises to the nucleus. It localises to the nucleolus. The protein resides in the nucleoplasm. It is found in the chromosome. Inhibits the poly(ADP-ribosyl)ation activity of PARP1 and the degradation of PARP1 by CASP3 following genotoxic stress. Binds to double-stranded RNA or DNA without sequence specificity. Involved in development of the eye and of primordial germ cells. This chain is Pumilio homolog 3, found in Rattus norvegicus (Rat).